The sequence spans 169 residues: Ribosome maturation factor RimM (169 aa).

The 74-residue stretch at 93–166 (GEHEFYYHEI…RIQITPLPGL (74 aa)) folds into the PRC barrel domain.

Belongs to the RimM family. In terms of assembly, binds ribosomal protein uS19.

The protein localises to the cytoplasm. An accessory protein needed during the final step in the assembly of 30S ribosomal subunit, possibly for assembly of the head region. Essential for efficient processing of 16S rRNA. May be needed both before and after RbfA during the maturation of 16S rRNA. It has affinity for free ribosomal 30S subunits but not for 70S ribosomes. The polypeptide is Ribosome maturation factor RimM (Exiguobacterium sibiricum (strain DSM 17290 / CCUG 55495 / CIP 109462 / JCM 13490 / 255-15)).